The following is a 384-amino-acid chain: SAGA complex subunit Spt3 (384 aa).

It belongs to the SPT3 family. As to quaternary structure, component of the Spt-Ada-Gcn5 acetyltransferase (SAGA) complex consisting of wda/Taf5L, Saf6, Taf9, Taf10b, Taf12, Ada1, Spt3, Spt7, Spt20, Sf3b3, Sf3b5, Nipped-A/Tra1, a histone acetyltransferase (HAT) module made up of Gcn5, Ada2b (Isoform B), Ada3 and Sgf29, and a deubiquitinase (DUB) module made up of not/nonstop, Sgf11 and e(y)2 tethered to SAGA by Atxn7. Taf5 and Taf10, which has partially redundant properties with Taf10b, may also be part of this complex.

It localises to the nucleus. Its subcellular location is the chromosome. Functionally, component of the transcription regulatory complex SAGA, a multiprotein complex that activates transcription by remodeling chromatin and mediating histone acetylation and deubiquitination. The SAGA complex predominantly acetylates histone H3. Required for oogenesis; involved in transcriptional activation. The polypeptide is SAGA complex subunit Spt3 (Drosophila melanogaster (Fruit fly)).